The sequence spans 542 residues: Chaperonin GroEL (542 aa).

Residues 29–32, 86–90, Gly-413, 476–478, and Asp-492 contribute to the ATP site; these read TLGP, DGTTT, and NAA.

Belongs to the chaperonin (HSP60) family. Forms a cylinder of 14 subunits composed of two heptameric rings stacked back-to-back. Interacts with the co-chaperonin GroES.

It is found in the cytoplasm. It carries out the reaction ATP + H2O + a folded polypeptide = ADP + phosphate + an unfolded polypeptide.. Together with its co-chaperonin GroES, plays an essential role in assisting protein folding. The GroEL-GroES system forms a nano-cage that allows encapsulation of the non-native substrate proteins and provides a physical environment optimized to promote and accelerate protein folding. This Listeria welshimeri serovar 6b (strain ATCC 35897 / DSM 20650 / CCUG 15529 / CIP 8149 / NCTC 11857 / SLCC 5334 / V8) protein is Chaperonin GroEL.